The sequence spans 663 residues: UvrABC system protein B (663 aa).

Positions 1–10 (MIDKRDDKPF) are enriched in basic and acidic residues. Positions 1 to 23 (MIDKRDDKPFKLKSKYKPSGDQP) are disordered. The Helicase ATP-binding domain occupies 31–271 (DNIEGGEKAQ…EQSIAKIQAE (241 aa)). 44–51 (GATGTGKT) is a binding site for ATP. The Beta-hairpin signature appears at 97-120 (YYDYYQPEAYVPSSDTYIEKDSSV). Residues 435–601 (QMDDLLGEIN…TIKKDIRGLI (167 aa)) enclose the Helicase C-terminal domain. In terms of domain architecture, UVR spans 627–662 (KEAINALQKQMQEAAELLDFELAAQMRDLILELKLM).

Belongs to the UvrB family. Forms a heterotetramer with UvrA during the search for lesions. Interacts with UvrC in an incision complex.

Its subcellular location is the cytoplasm. The UvrABC repair system catalyzes the recognition and processing of DNA lesions. A damage recognition complex composed of 2 UvrA and 2 UvrB subunits scans DNA for abnormalities. Upon binding of the UvrA(2)B(2) complex to a putative damaged site, the DNA wraps around one UvrB monomer. DNA wrap is dependent on ATP binding by UvrB and probably causes local melting of the DNA helix, facilitating insertion of UvrB beta-hairpin between the DNA strands. Then UvrB probes one DNA strand for the presence of a lesion. If a lesion is found the UvrA subunits dissociate and the UvrB-DNA preincision complex is formed. This complex is subsequently bound by UvrC and the second UvrB is released. If no lesion is found, the DNA wraps around the other UvrB subunit that will check the other stand for damage. The sequence is that of UvrABC system protein B from Streptococcus pyogenes serotype M4 (strain MGAS10750).